A 394-amino-acid polypeptide reads, in one-letter code: Ceramide glucosyltransferase (394 aa).

Residues 1–10 (MAVLDLALQG) lie on the Lumenal side of the membrane. A helical transmembrane segment spans residues 11-32 (LAIFGCVLFFVLWFMHFLSIVY). Over 33-195 (TRLHLNKKVS…QVYFGTSHPR (163 aa)) the chain is Cytoplasmic. Residue D92 is a short sequence motif, D1. Residue D144 is a short sequence motif, D2. The helical transmembrane segment at 196–215 (SYISANVTGFKCVTGMSCLM) threads the bilayer. Over 216-287 (RKEVLDQAGG…KLRINMLPAT (72 aa)) the chain is Lumenal. A short sequence motif (D3) is located at residue D236. D236 serves as the catalytic Proton acceptor. The short motif at 272–276 (RMIRW) is the (Q/R)XXRW element. The helical transmembrane segment at 288–304 (IICEPISECFVASLIIG) threads the bilayer. The Cytoplasmic segment spans residues 305–309 (WAAHH). Residues 310–328 (IFRWDIMVFFMCHCLAWFI) traverse the membrane as a helical segment. At 329–348 (FDYIQLRGVQGGPLNFSKLD) the chain is on the lumenal side. A helical transmembrane segment spans residues 349-369 (YAVAWFIRESMTIYIFLSALW). Topologically, residues 370-394 (DPTISWRTGRYRLRCGGTAEEILDV) are cytoplasmic.

It belongs to the glycosyltransferase 2 family.

The protein localises to the golgi apparatus membrane. It catalyses the reaction an N-acylsphing-4-enine + UDP-alpha-D-glucose = a beta-D-glucosyl-(1&lt;-&gt;1')-N-acylsphing-4-enine + UDP + H(+). It carries out the reaction UDP-alpha-D-xylose + an N-acylsphing-4-enine = a beta-D-xylosyl-(1&lt;-&gt;1')-N-acylsphing-4-enine + UDP + H(+). The catalysed reaction is N-(9Z-octadecenoyl)-sphing-4-enine + UDP-alpha-D-xylose = beta-D-xylosyl-(1&lt;-&gt;1')-N-(9Z-octadecenoyl)-sphing-4-enine + UDP + H(+). Its pathway is lipid metabolism; sphingolipid metabolism. Its function is as follows. Participates in the initial step of the glucosylceramide-based glycosphingolipid/GSL synthetic pathway at the cytosolic surface of the Golgi. Catalyzes the transfer of glucose from UDP-glucose to ceramide to produce glucosylceramide/GlcCer (such as beta-D-glucosyl-(1&lt;-&gt;1')-N-acylsphing-4-enine). Glucosylceramide is the core component of glycosphingolipids/GSLs, amphipathic molecules consisting of a ceramide lipid moiety embedded in the outer leaflet of the membrane, linked to one of hundreds of different externally oriented oligosaccharide structures. Glycosphingolipids are essential components of membrane microdomains that mediate membrane trafficking and signal transduction. They are implicated in many fundamental cellular processes, including growth, differentiation, migration, morphogenesis, cell-to-cell and cell-to-matrix interactions. Catalyzes the synthesis of xylosylceramide/XylCer (such as beta-D-xylosyl-(1&lt;-&gt;1')-N-acylsphing-4-enine) using UDP-Xyl as xylose donor. The protein is Ceramide glucosyltransferase (ugcg) of Xenopus tropicalis (Western clawed frog).